Reading from the N-terminus, the 138-residue chain is Membrane protein P8A7 (138 aa).

The next 4 helical transmembrane spans lie at 12-30, 32-56, 71-90, and 93-118; these read ILVI…YLFV, GLFH…IVLL, YTYW…LILG, and GFFL…LLGC.

The protein resides in the membrane. In Dictyostelium discoideum (Social amoeba), this protein is Membrane protein P8A7 (pmpA).